An 84-amino-acid polypeptide reads, in one-letter code: Beta-defensin 119 (84 aa).

The first 21 residues, 1–21, serve as a signal peptide directing secretion; sequence MKFLFLFLAILLATKIPVISG. 3 disulfides stabilise this stretch: Cys-28–Cys-55, Cys-35–Cys-49, and Cys-39–Cys-56.

The protein belongs to the beta-defensin family.

It localises to the secreted. Functionally, has antibacterial activity. The chain is Beta-defensin 119 (DEFB119) from Macaca fascicularis (Crab-eating macaque).